A 412-amino-acid chain; its full sequence is MIEEEVLKIIKPTEEDKKGIEKVLEIIRERLNKLDFEVEGSFRKGTWLRQDTDIDVFVFYPKDVGKEYLERNALNDIINRIKDLDYTLAYAEHPYVIVNINNVEVDIVPALRVESGDKAITAVDRTPFHTKYVTSHLDERGKDEVRLLKRFMKGIGVYGAELKVQGFSGYATELLIIYYGNFRKVLEEASKWKHPIKIELTKPMKIFSEPLIIPDPVDPKRNVTAAVSLKNIATFSIAAKYYLKNPSIEFFFPSKKVEEKVKGDVLILRLNLDEKSSEDIVWGQIKRSVNKIERALKQYGFRVIDVQAWGDTNNITIAVQLESKNIGQYYLNIGPQYYSGTIEDFIQKNDNIWVGEDGRLYSIKERKEYDAETIAKKNIVLKVKYNIESYWLQNTEDQQIMKFLRKTPTWLK.

Positions 41 and 44 each coordinate ATP. Residues serine 41 and lysine 44 each contribute to the CTP site. Mg(2+) contacts are provided by aspartate 53, aspartate 55, and aspartate 106. Residues histidine 129, lysine 149, and tyrosine 158 each coordinate ATP. Residues histidine 129, lysine 149, and tyrosine 158 each contribute to the CTP site.

Belongs to the tRNA nucleotidyltransferase/poly(A) polymerase family. Archaeal CCA-adding enzyme subfamily. In terms of assembly, homodimer. Mg(2+) serves as cofactor.

It carries out the reaction a tRNA precursor + 2 CTP + ATP = a tRNA with a 3' CCA end + 3 diphosphate. The catalysed reaction is a tRNA with a 3' CCA end + 2 CTP + ATP = a tRNA with a 3' CCACCA end + 3 diphosphate. Functionally, catalyzes the addition and repair of the essential 3'-terminal CCA sequence in tRNAs without using a nucleic acid template. Adds these three nucleotides in the order of C, C, and A to the tRNA nucleotide-73, using CTP and ATP as substrates and producing inorganic pyrophosphate. tRNA 3'-terminal CCA addition is required both for tRNA processing and repair. Also involved in tRNA surveillance by mediating tandem CCA addition to generate a CCACCA at the 3' terminus of unstable tRNAs. While stable tRNAs receive only 3'-terminal CCA, unstable tRNAs are marked with CCACCA and rapidly degraded. The sequence is that of CCA-adding enzyme from Saccharolobus solfataricus (strain ATCC 35092 / DSM 1617 / JCM 11322 / P2) (Sulfolobus solfataricus).